The primary structure comprises 310 residues: Oxygen-dependent coproporphyrinogen-III oxidase (310 aa).

Substrate is bound at residue serine 92. A divalent metal cation-binding residues include histidine 96 and histidine 106. Histidine 106 functions as the Proton donor in the catalytic mechanism. Residue 108–110 participates in substrate binding; sequence NVR. The a divalent metal cation site is built by histidine 145 and histidine 175. Positions 240 to 275 are important for dimerization; that stretch reads YVEFNLIWDRGTLFGLQSGGRTESILMSMPPLARWE. A substrate-binding site is contributed by 258–260; sequence GGR.

Belongs to the aerobic coproporphyrinogen-III oxidase family. Homodimer. Requires a divalent metal cation as cofactor.

It localises to the cytoplasm. The catalysed reaction is coproporphyrinogen III + O2 + 2 H(+) = protoporphyrinogen IX + 2 CO2 + 2 H2O. The protein operates within porphyrin-containing compound metabolism; protoporphyrin-IX biosynthesis; protoporphyrinogen-IX from coproporphyrinogen-III (O2 route): step 1/1. Its function is as follows. Involved in the heme biosynthesis. Catalyzes the aerobic oxidative decarboxylation of propionate groups of rings A and B of coproporphyrinogen-III to yield the vinyl groups in protoporphyrinogen-IX. The chain is Oxygen-dependent coproporphyrinogen-III oxidase from Pectobacterium carotovorum subsp. carotovorum (strain PC1).